Here is a 335-residue protein sequence, read N- to C-terminus: Ethanol acetyltransferase 1 (335 aa).

Residues 48–300 (PIVFVHGIFG…NSAHDILDQR (253 aa)) form the AB hydrolase-1 domain. Active-site charge relay system residues include Ser-121, Asp-145, and His-294.

The protein belongs to the AB hydrolase superfamily.

The protein resides in the mitochondrion. The enzyme catalyses ethanol + acetyl-CoA = ethyl acetate + CoA. It carries out the reaction acetyl-CoA + H2O = acetate + CoA + H(+). The catalysed reaction is ethyl acetate + H2O = ethanol + acetate + H(+). Alcohol acetyltransferase that catalyzes the synthesis of ethyl acetate from ethanol and acetyl-CoA. Can also function as a thioesterase by hydrolyzing acetyl-CoA in the absence of ethanol, as well as esterase hydrolyzing ethyl acetate. In Cyberlindnera fabianii (Yeast), this protein is Ethanol acetyltransferase 1 (EAT1).